The following is a 307-amino-acid chain: Potassium channel subfamily K member 7 (307 aa).

Topologically, residues 1 to 10 are cytoplasmic; sequence MGSLKPWARY. Residues 11–31 form a helical membrane-spanning segment; that stretch reads LLLLMAHLLAMGLGAVVLQAL. Residue Asn-83 is glycosylated (N-linked (GlcNAc...) asparagine). The segment at residues 92 to 118 is an intramembrane region (pore-forming); that stretch reads LPSALLFTASILTTTGYGHMAPLSSGG. The helical transmembrane segment at 120 to 140 threads the bilayer; sequence AFCVVYAALGLPASLALVAAL. The Cytoplasmic segment spans residues 141 to 172; the sequence is RHCLLPVFSRPGDWVAIRWQLAPAQAALLQAA. Residues 173–193 form a helical membrane-spanning segment; sequence GLGLLVACVFMLLPALVLWGV. The pore-forming intramembrane region spans 199 to 227; sequence LLEAIYFCFGSLSTIGLGDLLPAHGRGLH. Residues 233–253 traverse the membrane as a helical segment; sequence LGQFALLGYLLLGLLAMLLAV. The Cytoplasmic segment spans residues 254–307; the sequence is ETFSELPQVRAMVKFFGPSGSRTDEDQDGILGQDELALSTVLPDAPVLGPTTPA.

The protein belongs to the two pore domain potassium channel (TC 1.A.1.8) family. Homodimer. In terms of tissue distribution, detected in embryo, eye, lung and liver. Weakly expressed in colon, testis, atria, kidney, intestine, bladder, uterus, ovary, salivary gland, thymus and brain stem. Not detected in brain, cerebellum, spinal cord, heart, ventricle, skeletal muscle, liver, placenta and pancreas. In the eye, highly expressed in the retinal ganglion cell layer and inner nuclear layer.

The protein localises to the membrane. Functionally, probable potassium channel subunit. No channel activity observed in vitro as protein remains in the endoplasmic reticulum. May need to associate with an as yet unknown partner in order to reach the plasma membrane. The chain is Potassium channel subfamily K member 7 (Kcnk7) from Mus musculus (Mouse).